The primary structure comprises 317 residues: Ribosomal RNA small subunit methyltransferase H (317 aa).

S-adenosyl-L-methionine is bound by residues 37 to 39 (AGH), Asp56, Phe85, Asp106, and Gln113.

This sequence belongs to the methyltransferase superfamily. RsmH family.

It localises to the cytoplasm. It catalyses the reaction cytidine(1402) in 16S rRNA + S-adenosyl-L-methionine = N(4)-methylcytidine(1402) in 16S rRNA + S-adenosyl-L-homocysteine + H(+). Functionally, specifically methylates the N4 position of cytidine in position 1402 (C1402) of 16S rRNA. This is Ribosomal RNA small subunit methyltransferase H from Lactococcus lactis subsp. cremoris (strain SK11).